Here is a 388-residue protein sequence, read N- to C-terminus: Arginine biosynthesis bifunctional protein ArgJ (388 aa).

Substrate is bound by residues Thr150, Lys172, Thr183, Glu263, Asn383, and Ser388. Thr183 (nucleophile) is an active-site residue.

The protein belongs to the ArgJ family. In terms of assembly, heterotetramer of two alpha and two beta chains.

Its subcellular location is the cytoplasm. It catalyses the reaction N(2)-acetyl-L-ornithine + L-glutamate = N-acetyl-L-glutamate + L-ornithine. It carries out the reaction L-glutamate + acetyl-CoA = N-acetyl-L-glutamate + CoA + H(+). Its pathway is amino-acid biosynthesis; L-arginine biosynthesis; L-ornithine and N-acetyl-L-glutamate from L-glutamate and N(2)-acetyl-L-ornithine (cyclic): step 1/1. The protein operates within amino-acid biosynthesis; L-arginine biosynthesis; N(2)-acetyl-L-ornithine from L-glutamate: step 1/4. In terms of biological role, catalyzes two activities which are involved in the cyclic version of arginine biosynthesis: the synthesis of N-acetylglutamate from glutamate and acetyl-CoA as the acetyl donor, and of ornithine by transacetylation between N(2)-acetylornithine and glutamate. This is Arginine biosynthesis bifunctional protein ArgJ from Corynebacterium glutamicum (strain ATCC 13032 / DSM 20300 / JCM 1318 / BCRC 11384 / CCUG 27702 / LMG 3730 / NBRC 12168 / NCIMB 10025 / NRRL B-2784 / 534).